Consider the following 278-residue polypeptide: Phosphonates import ATP-binding protein PhnC (278 aa).

The ABC transporter domain maps to 25 to 273 (LAVKGLVKAY…IIQDIYSDES (249 aa)). An ATP-binding site is contributed by 58–65 (GRSGAGKS).

It belongs to the ABC transporter superfamily. Phosphonates importer (TC 3.A.1.9.1) family. The complex is composed of two ATP-binding proteins (PhnC), two transmembrane proteins (PhnE) and a solute-binding protein (PhnD).

It is found in the cell inner membrane. It carries out the reaction phosphonate(out) + ATP + H2O = phosphonate(in) + ADP + phosphate + H(+). Functionally, part of the ABC transporter complex PhnCDE involved in phosphonates import. Responsible for energy coupling to the transport system. The chain is Phosphonates import ATP-binding protein PhnC from Yersinia pestis bv. Antiqua (strain Antiqua).